We begin with the raw amino-acid sequence, 322 residues long: Alanine dehydrogenase (322 aa).

Lys65 serves as the catalytic Proton donor/acceptor. NAD(+)-binding positions include Arg108, 135-136, 157-159, 217-219, Lys223, and Ser290; these read TQ, DVR, and GAD.

Belongs to the ornithine cyclodeaminase/mu-crystallin family. Archaeal alanine dehydrogenase subfamily. In terms of assembly, homodimer.

The catalysed reaction is L-alanine + NAD(+) + H2O = pyruvate + NH4(+) + NADH + H(+). Catalyzes the NAD(+)-dependent oxidative deamination of L-alanine to pyruvate, and the reverse reaction, the reductive amination of pyruvate. Its physiological role is not known. Cannot use NADP(+) instead of NAD(+) as a cosubstrate. In the deamination direction, can also efficiently use L-2-aminobutyrate as substrate. In the reductive amination direction, also exhibits high activity with 2-oxobutyrate and oxaloacetate as substrate. In contrast to bacterial homologs, does not exhibit any ornithine cyclodeaminase activity. In Archaeoglobus fulgidus (strain ATCC 49558 / DSM 4304 / JCM 9628 / NBRC 100126 / VC-16), this protein is Alanine dehydrogenase.